The chain runs to 197 residues: Large ribosomal subunit protein eL15 (197 aa).

Over residues 163-172 the composition is skewed to basic residues; the sequence is GKTSAGRKGR. The disordered stretch occupies residues 163-197; it reads GKTSAGRKGRGMQTRGTGTEKTRPSVRSNLNRSKK. Positions 186 to 197 are enriched in polar residues; that stretch reads PSVRSNLNRSKK.

Belongs to the eukaryotic ribosomal protein eL15 family.

In Methanococcoides burtonii (strain DSM 6242 / NBRC 107633 / OCM 468 / ACE-M), this protein is Large ribosomal subunit protein eL15.